The chain runs to 598 residues: uncharacterized protein (598 aa).

The span at 1-23 shows a compositional bias: basic and acidic residues; that stretch reads MSHEGSRQARDRGVTRSKAEKAR. 3 disordered regions span residues 1 to 32, 151 to 190, and 222 to 241; these read MSHE…VPQV, FHNE…VTPR, and PSKE…SPQS. Basic and acidic residues predominate over residues 225-235; it reads ESLRSTAEGER. Phosphoserine is present on residues Ser238 and Ser242. 2 disordered regions span residues 366–396 and 551–571; these read RRSQ…SSPR and AEEG…VSKP. 2 stretches are compositionally biased toward polar residues: residues 369 to 386 and 558 to 569; these read QAGT…SSRA and APEQQPIQTGVS.

This is an uncharacterized protein from Mus musculus (Mouse).